The chain runs to 797 residues: Ribosome biogenesis protein BOP1 homolog (797 aa).

Disordered regions lie at residues 22–112 (LVPS…GGGP) and 149–177 (SICA…RNTV). The span at 61–73 (AGAAAAAVEGTAA) shows a compositional bias: low complexity. Residues 74–87 (PEDEAADNSSEEDA) show a composition bias toward acidic residues. Residues 90–112 (GSHGEGAGEGGGSGTWPGNGGGP) are compositionally biased toward gly residues. WD repeat units follow at residues 462 to 502 (GHMG…CWRT), 504 to 544 (VLEG…EEAE), 581 to 623 (RLRF…SQNP), 626 to 664 (KNRG…LAKK), 667 to 706 (GGGG…KPYK), 710 to 749 (YHSA…DLLT), and 766 to 797 (TASE…LYCN).

It belongs to the WD repeat BOP1/ERB1 family.

Its subcellular location is the nucleus. The protein resides in the nucleolus. It is found in the nucleoplasm. Its function is as follows. Required for maturation of ribosomal RNAs and formation of the large ribosomal subunit. In Chlamydomonas reinhardtii (Chlamydomonas smithii), this protein is Ribosome biogenesis protein BOP1 homolog.